Here is a 293-residue protein sequence, read N- to C-terminus: ATP phosphoribosyltransferase (293 aa).

Belongs to the ATP phosphoribosyltransferase family. Long subfamily. The cofactor is Mg(2+).

It localises to the cytoplasm. The catalysed reaction is 1-(5-phospho-beta-D-ribosyl)-ATP + diphosphate = 5-phospho-alpha-D-ribose 1-diphosphate + ATP. It participates in amino-acid biosynthesis; L-histidine biosynthesis; L-histidine from 5-phospho-alpha-D-ribose 1-diphosphate: step 1/9. Its activity is regulated as follows. Feedback inhibited by histidine. Functionally, catalyzes the condensation of ATP and 5-phosphoribose 1-diphosphate to form N'-(5'-phosphoribosyl)-ATP (PR-ATP). Has a crucial role in the pathway because the rate of histidine biosynthesis seems to be controlled primarily by regulation of HisG enzymatic activity. In Nitratidesulfovibrio vulgaris (strain ATCC 29579 / DSM 644 / CCUG 34227 / NCIMB 8303 / VKM B-1760 / Hildenborough) (Desulfovibrio vulgaris), this protein is ATP phosphoribosyltransferase.